A 120-amino-acid polypeptide reads, in one-letter code: Aspartate 1-decarboxylase (120 aa).

The active-site Schiff-base intermediate with substrate; via pyruvic acid is the Ser25. Ser25 is modified (pyruvic acid (Ser)). Position 57 (Thr57) interacts with substrate. Catalysis depends on Tyr58, which acts as the Proton donor. 73 to 75 (GAA) is a substrate binding site.

This sequence belongs to the PanD family. Heterooctamer of four alpha and four beta subunits. The cofactor is pyruvate. Post-translationally, is synthesized initially as an inactive proenzyme, which is activated by self-cleavage at a specific serine bond to produce a beta-subunit with a hydroxyl group at its C-terminus and an alpha-subunit with a pyruvoyl group at its N-terminus.

The protein localises to the cytoplasm. It carries out the reaction L-aspartate + H(+) = beta-alanine + CO2. It functions in the pathway cofactor biosynthesis; (R)-pantothenate biosynthesis; beta-alanine from L-aspartate: step 1/1. Its function is as follows. Catalyzes the pyruvoyl-dependent decarboxylation of aspartate to produce beta-alanine. The chain is Aspartate 1-decarboxylase from Thermosipho africanus (strain TCF52B).